We begin with the raw amino-acid sequence, 295 residues long: Nucleotide-binding protein EF_0766 (295 aa).

ATP is bound at residue 12-19; sequence GMSGAGKT. 62-65 provides a ligand contact to GTP; sequence DLRS.

This sequence belongs to the RapZ-like family.

Its function is as follows. Displays ATPase and GTPase activities. This Enterococcus faecalis (strain ATCC 700802 / V583) protein is Nucleotide-binding protein EF_0766.